The sequence spans 970 residues: Insulin-degrading enzyme-like 1, peroxisomal (970 aa).

A Zn(2+)-binding site is contributed by His-69. Glu-72 serves as the catalytic Proton acceptor. His-73 provides a ligand contact to Zn(2+). Glu-143 is an active-site residue. Glu-150 serves as a coordination point for Zn(2+).

This sequence belongs to the peptidase M16 family. Requires Zn(2+) as cofactor.

It is found in the peroxisome. Its function is as follows. Peptidase that might be involved in pathogen or wound response. Not required for peroxisome biogenesis, indole-3-butyric acid (IBA) metabolism, fatty acid beta-oxidation or degradation of glyoxylate cycle enzymes during seedling development. The chain is Insulin-degrading enzyme-like 1, peroxisomal (PXM16) from Arabidopsis thaliana (Mouse-ear cress).